The following is a 389-amino-acid chain: Succinate--CoA ligase [ADP-forming] subunit beta (389 aa).

The ATP-grasp domain maps to 9-236; it reads RDLFEKHGVP…KTTADPLEEK (228 aa). ATP is bound by residues Lys-45, 52 to 54, Ala-94, and Glu-99; that span reads GRG. The Mg(2+) site is built by Asn-191 and Asp-205. Substrate contacts are provided by residues Asn-256 and 318–320; that span reads GIT.

Belongs to the succinate/malate CoA ligase beta subunit family. As to quaternary structure, heterotetramer of two alpha and two beta subunits. Requires Mg(2+) as cofactor.

The catalysed reaction is succinate + ATP + CoA = succinyl-CoA + ADP + phosphate. It carries out the reaction GTP + succinate + CoA = succinyl-CoA + GDP + phosphate. It participates in carbohydrate metabolism; tricarboxylic acid cycle; succinate from succinyl-CoA (ligase route): step 1/1. Functionally, succinyl-CoA synthetase functions in the citric acid cycle (TCA), coupling the hydrolysis of succinyl-CoA to the synthesis of either ATP or GTP and thus represents the only step of substrate-level phosphorylation in the TCA. The beta subunit provides nucleotide specificity of the enzyme and binds the substrate succinate, while the binding sites for coenzyme A and phosphate are found in the alpha subunit. This Kocuria rhizophila (strain ATCC 9341 / DSM 348 / NBRC 103217 / DC2201) protein is Succinate--CoA ligase [ADP-forming] subunit beta.